The sequence spans 100 residues: U-myrmeciitoxin(01)-Mg7c (100 aa).

The N-terminal stretch at 1–17 is a signal peptide; the sequence is MKLSYLSLALAIILVLA. Residues 18–50 constitute a propeptide that is removed on maturation; sequence IVYSPHMEVKALADAEPDAIGFADAFGEADAEP. A glycan (O-linked (GalNAc...) serine) is linked at Ser-85. O-linked (GalNAc...) threonine glycans are attached at residues Thr-94 and Thr-95.

Belongs to the formicidae venom precursor-01 superfamily. Glycosylation is critical to maintaining the aqueous solubility of this protein, but does not directly contribute to its activity. In terms of tissue distribution, expressed by the venom gland.

Its subcellular location is the secreted. The protein localises to the target cell membrane. Its function is as follows. Neurotoxin that triggers pain behavior and inflammation in mammals, and is paralytic and lethal to insects. Causes a time-dependent increase in cell leak current. May act by targeting membranes. This is U-myrmeciitoxin(01)-Mg7c from Myrmecia gulosa (Red bulldog ant).